Here is a 412-residue protein sequence, read N- to C-terminus: L-cysteine:1D-myo-inositol 2-amino-2-deoxy-alpha-D-glucopyranoside ligase (412 aa).

C45 contributes to the Zn(2+) binding site. L-cysteinyl-5'-AMP contacts are provided by residues 45-48 (CGIT), T60, and 83-85 (NIT). The short motif at 47 to 57 (ITPYDAAHLGH) is the 'HIGH' region element. The short motif at 185–190 (ERGGDP) is the 'ERGGDP' region element. W225 serves as a coordination point for L-cysteinyl-5'-AMP. C229 serves as a coordination point for Zn(2+). Position 247-249 (247-249 (GDD)) interacts with L-cysteinyl-5'-AMP. Residue H254 coordinates Zn(2+). Position 281 (V281) interacts with L-cysteinyl-5'-AMP. Positions 287–291 (KMSKS) match the 'KMSKS' region motif.

Belongs to the class-I aminoacyl-tRNA synthetase family. MshC subfamily. In terms of assembly, monomer. The cofactor is Zn(2+).

The enzyme catalyses 1D-myo-inositol 2-amino-2-deoxy-alpha-D-glucopyranoside + L-cysteine + ATP = 1D-myo-inositol 2-(L-cysteinylamino)-2-deoxy-alpha-D-glucopyranoside + AMP + diphosphate + H(+). Functionally, catalyzes the ATP-dependent condensation of GlcN-Ins and L-cysteine to form L-Cys-GlcN-Ins. This is L-cysteine:1D-myo-inositol 2-amino-2-deoxy-alpha-D-glucopyranoside ligase from Thermobifida fusca (strain YX).